Reading from the N-terminus, the 196-residue chain is Peptidyl-tRNA hydrolase (196 aa).

Tyrosine 18 contributes to the tRNA binding site. The active-site Proton acceptor is the histidine 23. Residues phenylalanine 69, asparagine 71, and asparagine 117 each contribute to the tRNA site.

The protein belongs to the PTH family. Monomer.

Its subcellular location is the cytoplasm. It catalyses the reaction an N-acyl-L-alpha-aminoacyl-tRNA + H2O = an N-acyl-L-amino acid + a tRNA + H(+). Its function is as follows. Hydrolyzes ribosome-free peptidyl-tRNAs (with 1 or more amino acids incorporated), which drop off the ribosome during protein synthesis, or as a result of ribosome stalling. Catalyzes the release of premature peptidyl moieties from peptidyl-tRNA molecules trapped in stalled 50S ribosomal subunits, and thus maintains levels of free tRNAs and 50S ribosomes. The sequence is that of Peptidyl-tRNA hydrolase from Vibrio vulnificus (strain CMCP6).